A 300-amino-acid polypeptide reads, in one-letter code: Probable endonuclease 4 (300 aa).

9 residues coordinate Zn(2+): histidine 68, histidine 109, glutamate 144, aspartate 178, histidine 181, histidine 213, aspartate 226, histidine 228, and glutamate 258.

This sequence belongs to the AP endonuclease 2 family. Zn(2+) is required as a cofactor.

The enzyme catalyses Endonucleolytic cleavage to 5'-phosphooligonucleotide end-products.. In terms of biological role, endonuclease IV plays a role in DNA repair. It cleaves phosphodiester bonds at apurinic or apyrimidinic (AP) sites, generating a 3'-hydroxyl group and a 5'-terminal sugar phosphate. The chain is Probable endonuclease 4 from Latilactobacillus sakei subsp. sakei (strain 23K) (Lactobacillus sakei subsp. sakei).